Reading from the N-terminus, the 1244-residue chain is SWI/SNF chromatin remodeling complex subunit swsn-7 (1244 aa).

In terms of domain architecture, ARID spans 24–116 (QRKMAEFYNS…YLSKFEQVET (93 aa)). Polar residues predominate over residues 486–496 (FTQGSNQQQNP). Disordered stretches follow at residues 486 to 534 (FTQG…GAAP), 556 to 583 (NREQ…ILAH), and 597 to 619 (DRRT…ESQL). Over residues 497 to 508 (HHSQGGHQLGHS) the composition is skewed to low complexity. Residues 556 to 566 (NREQYSTQSSQ) show a composition bias toward polar residues. The span at 567-578 (PHPPHTNVPPSP) shows a compositional bias: pro residues. The segment covering 610 to 619 (PSTNSGESQL) has biased composition (polar residues). The segment at residues 623 to 697 (TEKWIRQNCV…IVAQGIRLIR (75 aa)) is a DNA-binding region (RFX-type winged-helix). The disordered stretch occupies residues 1134–1244 (EEEQQKMLSE…TTPVRAGAGI (111 aa)). Residues 1142-1158 (SEVPSSASLSSMAGSSS) are compositionally biased toward low complexity. 2 stretches are compositionally biased toward polar residues: residues 1159 to 1186 (QLPT…SNKP) and 1194 to 1212 (LNFS…FTAG). The segment covering 1220–1231 (PIQQHIPSQPSP) has biased composition (low complexity).

Component of the SWI/SNF-B (PBAF) chromatin remodeling complex.

The protein resides in the nucleus. Involved in transcriptional activation and repression of select genes by chromatin remodeling (alteration of DNA-nucleosome topology). Required for the stability of the SWI/SNF chromatin remodeling complex SWI/SNF-B (PBAF). Required for regulation of a stress response gene network, probably as part of the PBAF complex and perhaps acting in concert with histone demethylase jmjc-1. Binds to the ethanol and stress response elements (ESRE) in the promoter regions of hsp-16.1 and hsp-16.2, probably as part of the PBAF complex. This Caenorhabditis elegans protein is SWI/SNF chromatin remodeling complex subunit swsn-7.